Here is a 101-residue protein sequence, read N- to C-terminus: Isochorismate pyruvate lyase (101 aa).

Positions 4-94 constitute a Chorismate mutase domain; the sequence is PEDCTGLADI…WYIAEQIKYW (91 aa). Residues R14, R31, K42, and Q90 each contribute to the substrate site.

Dimer of dimers.

It catalyses the reaction isochorismate = salicylate + pyruvate. The catalysed reaction is chorismate = prephenate. It functions in the pathway siderophore biosynthesis; salicylate biosynthesis. Its activity is regulated as follows. Inhibited by endo-oxabicyclic diacid resembling to the conformation of the transition state. Its function is as follows. Involved in the incorporation of salicylate into the siderophore pyochelin. Catalyzes the elimination of the enolpyruvyl side chain from isochorismate to yield salicylate and pyruvate via a rare pericyclic hydrogen transfer mechanism from C2 to C5. PchB also catalyzes the nonphysiological Claisen rearrangement of chorismate to prephenate in which the pyruvylenol tail is transferred from a C3 ether linkage to a C1-C9 linkage. This is Isochorismate pyruvate lyase from Pseudomonas aeruginosa (strain ATCC 15692 / DSM 22644 / CIP 104116 / JCM 14847 / LMG 12228 / 1C / PRS 101 / PAO1).